Reading from the N-terminus, the 348-residue chain is MNMTQARLLVAAVVGLVAILLYASIHKIEEGHLAVYYRGGALLTSPSGPGYHIMLPFITTFRSVQTTLQTDEVKNVPCGTSGGVMIYIDRIEVVNMLAPYAVFDIVRNYTADYDKTLIFNKIHHELNQFCSAHTLQEVYIELFDQIDENLKQALQKDLNTMAPGLTIQAVRVTKPKIPEAIRRNFELMEAEKTKLLIAAQKQKVVEKEAETERKRAVIEAEKIAQVAKIRFQQKVMEKETEKRISEIEDAAFLAREKAKADAEYYAAHKYATSNKHKLTPEYLELKKYQAIASNSKIYFGSNIPSMFVDSSCALKYSDGRTGREDSLPPEEAREPSGESPIQNKENAG.

At 1–7 (MNMTQAR) the chain is on the cytoplasmic side. Residues 8-28 (LLVAAVVGLVAILLYASIHKI) form a helical membrane-spanning segment. The Lumenal portion of the chain corresponds to 29 to 348 (EEGHLAVYYR…SPIQNKENAG (320 aa)). An N-linked (GlcNAc...) asparagine glycan is attached at asparagine 108. Lysine 269 bears the N6-acetyllysine mark. Residues 318-336 (DGRTGREDSLPPEEAREPS) are compositionally biased toward basic and acidic residues. A disordered region spans residues 318-348 (DGRTGREDSLPPEEAREPSGESPIQNKENAG). Residues 339 to 348 (SPIQNKENAG) show a composition bias toward polar residues.

This sequence belongs to the band 7/mec-2 family. As to quaternary structure, forms a heteromeric complex with ERLIN2. In complex with ERLIN2, interacts with RNF170. Interacts with AMFR and SYVN1. In terms of processing, deubiquitinated by USP25; leading to stabilization.

The protein resides in the endoplasmic reticulum membrane. Functionally, component of the ERLIN1/ERLIN2 complex which mediates the endoplasmic reticulum-associated degradation (ERAD) of inositol 1,4,5-trisphosphate receptors (IP3Rs). Involved in regulation of cellular cholesterol homeostasis by regulation the SREBP signaling pathway. Binds cholesterol and may promote ER retention of the SCAP-SREBF complex. The chain is Erlin-1 from Mus musculus (Mouse).